We begin with the raw amino-acid sequence, 255 residues long: Dehydrogenase/reductase SDR family member 11 (255 aa).

Residues 1 to 23 form the signal peptide; the sequence is MERWTGRVALVTGASVGIGAAVA. NADP(+) is bound by residues 13 to 18, 38 to 39, Glu44, 65 to 66, and Asn92; these read GASVGI, RS, and DL. Substrate-binding residues include Ser146 and Tyr161. Residues Tyr161, Lys165, 196-199, and Lys203 each bind NADP(+); that span reads VETG. Tyr161 functions as the Proton acceptor in the catalytic mechanism.

It belongs to the short-chain dehydrogenases/reductases (SDR) family.

The protein resides in the secreted. The catalysed reaction is a 3beta-hydroxysteroid + NADP(+) = a 3-oxosteroid + NADPH + H(+). It carries out the reaction 17beta-estradiol + NAD(+) = estrone + NADH + H(+). The enzyme catalyses 17beta-estradiol + NADP(+) = estrone + NADPH + H(+). It functions in the pathway steroid biosynthesis; estrogen biosynthesis. With respect to regulation, inhibited by flavonoids including apigenin, luteolin, genistein, kaempferol and quercetin and also by carbenoxolone, zearalenone, glycyrrhetinic, curcumin and flufenamic acid. Its function is as follows. Catalyzes the conversion of the 17-keto group of estrone, 4- and 5-androstenes and 5-alpha-androstanes into their 17-beta-hydroxyl metabolites and the conversion of the 3-keto group of 3-, 3,17- and 3,20- diketosteroids into their 3-hydroxyl metabolites. Exhibits reductive 3-beta-hydroxysteroid dehydrogenase activity toward 5-beta-androstanes, 5-beta-pregnanes, 4-pregnenes and bile acids. May also reduce endogenous and exogenous alpha-dicarbonyl compounds and xenobiotic alicyclic ketones. The chain is Dehydrogenase/reductase SDR family member 11 (DHRS11) from Gallus gallus (Chicken).